Here is a 792-residue protein sequence, read N- to C-terminus: Ribosome biogenesis protein BOP1 homolog (792 aa).

Basic residues predominate over residues methionine 1 to valine 11. A disordered region spans residues methionine 1–isoleucine 167. 4 stretches are compositionally biased toward acidic residues: residues glutamate 44–aspartate 53, serine 60–glycine 72, glutamate 82–alanine 117, and glutamate 157–aspartate 166. 7 WD repeats span residues glycine 453–glutamate 494, asparagine 496–isoleucine 534, threonine 578–proline 620, lysine 623–lysine 661, threonine 664–glutamine 703, leucine 707–glutamine 746, and arginine 762–threonine 792.

It belongs to the WD repeat BOP1/ERB1 family.

The protein localises to the nucleus. It localises to the nucleolus. The protein resides in the nucleoplasm. Functionally, required for maturation of ribosomal RNAs and formation of the large ribosomal subunit. The polypeptide is Ribosome biogenesis protein BOP1 homolog (Drosophila mojavensis (Fruit fly)).